The following is a 441-amino-acid chain: Tol-Pal system protein TolB (441 aa).

The signal sequence occupies residues 1-23; it reads MRNAIATVLLGLAMLLPVGAVQA. Positions 420 to 441 are disordered; sequence RNLKPVKTPDGASDPSWSPLQN.

This sequence belongs to the TolB family. In terms of assembly, the Tol-Pal system is composed of five core proteins: the inner membrane proteins TolA, TolQ and TolR, the periplasmic protein TolB and the outer membrane protein Pal. They form a network linking the inner and outer membranes and the peptidoglycan layer.

It localises to the periplasm. Functionally, part of the Tol-Pal system, which plays a role in outer membrane invagination during cell division and is important for maintaining outer membrane integrity. This Ruegeria sp. (strain TM1040) (Silicibacter sp.) protein is Tol-Pal system protein TolB.